An 804-amino-acid polypeptide reads, in one-letter code: Chondroitin sulfate synthase mig-22 (804 aa).

The Cytoplasmic segment spans residues 1–6 (MVGGGR). The helical; Signal-anchor for type II membrane protein transmembrane segment at 7–27 (TGIHLLLGFLIGAALALFFFS) threads the bilayer. Topologically, residues 28 to 804 (STPSIDLTSS…QLAKLLFHEK (777 aa)) are lumenal. N-linked (GlcNAc...) asparagine glycans are attached at residues Asn-123, Asn-172, and Asn-268.

It belongs to the chondroitin N-acetylgalactosaminyltransferase family. In terms of assembly, interacts with sqv-5. A divalent metal cation serves as cofactor. In terms of tissue distribution, expressed in seam cells, the vulval epithelium and in oocytes (at protein level).

It localises to the golgi apparatus. Its subcellular location is the golgi stack membrane. It catalyses the reaction 3-O-(beta-D-GlcA-(1-&gt;3)-beta-D-GalNAc-(1-&gt;4)-beta-D-GlcA-(1-&gt;3)-beta-D-Gal-(1-&gt;3)-beta-D-Gal-(1-&gt;4)-beta-D-Xyl)-L-seryl-[protein] + UDP-N-acetyl-alpha-D-galactosamine = 3-O-(beta-D-GalNAc-(1-&gt;4)-beta-D-GlcA-(1-&gt;3)-beta-D-GalNAc-(1-&gt;4)-beta-D-GlcA-(1-&gt;3)-beta-D-Gal-(1-&gt;3)-beta-D-Gal-(1-&gt;4)-beta-D-Xyl)-L-seryl-[protein] + UDP + H(+). The enzyme catalyses 3-O-{beta-D-GlcA-(1-&gt;3)-[beta-D-GalNAc-(1-&gt;4)-beta-D-GlcA-(1-&gt;3)](n)-beta-D-GalNAc-(1-&gt;4)-beta-D-GlcA-(1-&gt;3)-beta-D-Gal-(1-&gt;3)-beta-D-Gal-(1-&gt;4)-beta-D-Xyl}-L-seryl-[protein] + UDP-N-acetyl-alpha-D-galactosamine = 3-O-{[beta-D-GalNAc-(1-&gt;4)-beta-D-GlcA-(1-&gt;3)](n+1)-beta-D-GalNAc-(1-&gt;4)-beta-D-GlcA-(1-&gt;3)-beta-D-Gal-(1-&gt;3)-beta-D-Gal-(1-&gt;4)-beta-D-Xyl}-L-seryl-[protein] + UDP + H(+). It carries out the reaction 3-O-(beta-D-GalNAc-(1-&gt;4)-beta-D-GlcA-(1-&gt;3)-beta-D-Gal-(1-&gt;3)-beta-D-Gal-(1-&gt;4)-beta-D-Xyl)-L-seryl-[protein] + UDP-alpha-D-glucuronate = 3-O-(beta-D-GlcA-(1-&gt;3)-beta-D-GalNAc-(1-&gt;4)-beta-D-GlcA-(1-&gt;3)-beta-D-Gal-(1-&gt;3)-beta-D-Gal-(1-&gt;4)-beta-D-Xyl)-L-seryl-[protein] + UDP + H(+). The catalysed reaction is 3-O-{[beta-D-GalNAc-(1-&gt;4)-beta-D-GlcA-(1-&gt;3)](n)-beta-D-GalNAc-(1-&gt;4)-beta-D-GlcA-(1-&gt;3)-beta-D-Gal-(1-&gt;3)-beta-D-Gal-(1-&gt;4)-beta-D-Xyl}-L-seryl-[protein] + UDP-alpha-D-glucuronate = 3-O-{beta-D-GlcA-(1-&gt;3)-[beta-D-GalNAc-(1-&gt;4)-beta-D-GlcA-(1-&gt;3)](n)-beta-D-GalNAc-(1-&gt;4)-beta-D-GlcA-(1-&gt;3)-beta-D-Gal-(1-&gt;3)-beta-D-Gal-(1-&gt;4)-beta-D-Xyl}-L-seryl-[protein] + UDP + H(+). Functionally, has both beta-1,3-glucuronic acid and beta-1,4-N-acetylgalactosamine transferase activity. Transfers glucuronic acid (GlcUA) from UDP-GlcUA and N-acetylgalactosamine (GalNAc) from UDP-GalNAc to the non-reducing end of the elongating chondroitin polymer. Required together with sqv-5 for the biosynthesis of chondroitin. Chondroitin is involved in organogenesis of the vulva, maturation of the gonad, and neural development. May have a specific role in unc-6/netrin-mediated dorsal guidance of gonadal distal tip cells. Glycosyltransferase activity is weak. This Caenorhabditis elegans protein is Chondroitin sulfate synthase mig-22 (mig-22).